The sequence spans 463 residues: GTPase Der (463 aa).

2 EngA-type G domains span residues 27-190 and 200-373; these read PVVA…PEVG and RRVA…ASWD. GTP is bound by residues 33–40, 80–84, 142–145, 206–213, 253–257, and 318–321; these read GRPNVGKS, DTGGW, NKVD, GKPNVGKS, DTAGL, and NKWD. Residues 374-456 enclose the KH-like domain; the sequence is TRIATGPLNT…PIRVNVRVRE (83 aa).

This sequence belongs to the TRAFAC class TrmE-Era-EngA-EngB-Septin-like GTPase superfamily. EngA (Der) GTPase family. Associates with the 50S ribosomal subunit.

GTPase that plays an essential role in the late steps of ribosome biogenesis. This Mycobacterium bovis (strain ATCC BAA-935 / AF2122/97) protein is GTPase Der.